Consider the following 146-residue polypeptide: Alpha-amylase inhibitor BMAI-1 (146 aa).

The signal sequence occupies residues 1-14 (PTSVAVDQGSMVSN). Asparagine 125 is a glycosylation site (N-linked (GlcNAc...) asparagine).

This sequence belongs to the protease inhibitor I6 (cereal trypsin/alpha-amylase inhibitor) family. In terms of assembly, monomer. Five disulfide bonds, which are essential for the inhibitor activity, are probably present. Post-translationally, glycosylated. In terms of tissue distribution, endosperm.

The protein localises to the secreted. Functionally, could be involved in insect defense mechanisms. Inhibits insect-type alpha-amylase. The polypeptide is Alpha-amylase inhibitor BMAI-1 (IAM1) (Hordeum vulgare (Barley)).